Here is a 245-residue protein sequence, read N- to C-terminus: Eukaryotic translation initiation factor 3 subunit K (245 aa).

The region spanning 46-227 (YDCYANLALL…EAKGTVVREN (182 aa)) is the PCI domain.

The protein belongs to the eIF-3 subunit K family. As to quaternary structure, component of the eukaryotic translation initiation factor 3 (eIF-3) complex.

The protein localises to the cytoplasm. Functionally, component of the eukaryotic translation initiation factor 3 (eIF-3) complex, which is involved in protein synthesis of a specialized repertoire of mRNAs and, together with other initiation factors, stimulates binding of mRNA and methionyl-tRNAi to the 40S ribosome. The eIF-3 complex specifically targets and initiates translation of a subset of mRNAs involved in cell proliferation. In Phaeosphaeria nodorum (strain SN15 / ATCC MYA-4574 / FGSC 10173) (Glume blotch fungus), this protein is Eukaryotic translation initiation factor 3 subunit K.